We begin with the raw amino-acid sequence, 395 residues long: Elongation factor Tu (395 aa).

In terms of domain architecture, tr-type G spans 10 to 204 (KTHANIGTIG…AVDEYIPTPE (195 aa)). The interval 19–26 (GHVDHGKT) is G1. 19 to 26 (GHVDHGKT) contacts GTP. T26 serves as a coordination point for Mg(2+). The tract at residues 60–64 (GITIN) is G2. The G3 stretch occupies residues 81 to 84 (DCPG). Residues 81–85 (DCPGH) and 136–139 (NKVD) each bind GTP. A G4 region spans residues 136–139 (NKVD). The G5 stretch occupies residues 174–176 (SAL).

Belongs to the TRAFAC class translation factor GTPase superfamily. Classic translation factor GTPase family. EF-Tu/EF-1A subfamily. In terms of assembly, monomer.

The protein localises to the cytoplasm. The enzyme catalyses GTP + H2O = GDP + phosphate + H(+). Functionally, GTP hydrolase that promotes the GTP-dependent binding of aminoacyl-tRNA to the A-site of ribosomes during protein biosynthesis. This Macrococcus caseolyticus (strain JCSC5402) (Macrococcoides caseolyticum) protein is Elongation factor Tu.